The sequence spans 154 residues: Interleukin-2 (154 aa).

The first 20 residues, 1 to 20, serve as a signal peptide directing secretion; it reads MCKMQLLSCIALSLVLVANS. O-linked (GalNAc...) threonine glycosylation is present at Thr-23. Cys-78 and Cys-126 form a disulfide bridge.

The protein belongs to the IL-2 family.

It is found in the secreted. Cytokine produced by activated CD4-positive helper T-cells and to a lesser extend activated CD8-positive T-cells and natural killer (NK) cells that plays pivotal roles in the immune response and tolerance. Binds to a receptor complex composed of either the high-affinity trimeric IL-2R (IL2RA/CD25, IL2RB/CD122 and IL2RG/CD132) or the low-affinity dimeric IL-2R (IL2RB and IL2RG). Interaction with the receptor leads to oligomerization and conformation changes in the IL-2R subunits resulting in downstream signaling starting with phosphorylation of JAK1 and JAK3. In turn, JAK1 and JAK3 phosphorylate the receptor to form a docking site leading to the phosphorylation of several substrates including STAT5. This process leads to activation of several pathways including STAT, phosphoinositide-3-kinase/PI3K and mitogen-activated protein kinase/MAPK pathways. Functions as a T-cell growth factor and can increase NK-cell cytolytic activity as well. Promotes strong proliferation of activated B-cells and subsequently immunoglobulin production. Plays a pivotal role in regulating the adaptive immune system by controlling the survival and proliferation of regulatory T-cells, which are required for the maintenance of immune tolerance. Moreover, participates in the differentiation and homeostasis of effector T-cell subsets, including Th1, Th2, Th17 as well as memory CD8-positive T-cells. This chain is Interleukin-2 (IL2), found in Mirounga angustirostris (Northern elephant seal).